A 2591-amino-acid polypeptide reads, in one-letter code: MYNKGINICLNEDNKCIILLHIIFNKCIVSFVASHILVEGKICFLNRIKNSKIFRRFGNINNHRRNNVKEYYKFVGRINKGKEKRNKCRIKLHRFYEYAKSYILKQIKWVLNKSKYIYFNIIYHLKTICYLKNAFFLQYTQRKYFSQNIENYIINSLPKHIQSFNPIKWSYYNNNEYASNYIIINNLNFIKYKNKYEKQYDIEMEEDINCKGANDIFYNSYNYCNNNNSNSKCDEKIEKNIVDKNIENKYNIKEYDKTNKSILFPIEEEFKKIIQIENNIERNYMVPNESNKNILYNIKNILEKIRNIEAISNINNYIDMKNTIESYKLNPDKCKEILHKDKDFRNKSKLCLSCFHNIIHKIIYYSKMENISFSDMYKQLLTNYNNTSCEYCNLINNSINSNNDFLSLYNDKNMYNWKNCEKNKFETLENEISCWNFNSSYGNHFQHIQKNSKIYRRILNEENEKAFNNIVGRNEMENDELYKRIHTENNYANQFTENNVDFGVYSDLREYNNGNEKYMLDENEMDQIIDEEVKKQEKNQNLNNMDFNNVNKKYNQLKDDNIIIFNKNNMHNNLYSNGLNDSNLEKNNILFPYEKYNNLDKNEMNLTKYSQNKQFYGQYKYDEAIYKYDLIVLDTSGYIYKVSTDGTYHWKYRIVKNIQYYINYEEENKIENYYNAFKKNNGKINMTHKDILRKNDYEQYHKLKLRAMKKLQYNNFIDVFNSNYKKNYPTYLNEQITEKDDIYKKKNYNYEKSKKKSKNKNAMKKLLSDYSGDLFYVDENNEAIPININIKDVVNNSPFKSTLFPNILFIGSRQSSIVNLDFDTGYVIKKYEENYDDLVKEKQKALPNKYEKFINKNSNVLHDKLEKYLDHSIDINDKNYYVNEEKDDLDKDYTIIDGKVAENNQQLDNIDLYNNEIETENNNGINHLLLIDGKGQIEEQSPNNGNKIIKGDVSNMTDECGTENCLSKHSKEEIEIANNKFNKNNKDKLLIQRTKIKNKKHFLMGKWYMNISNNNLLNINSSVLGINKKKRNSKKGENRNKKRKTQKRQLQISLVKWVIKAVDETSLKQKWITSWVDVGSIFITDSHKQDLSFINSLIDIDGNKLILRTLENNKVNKPYNNTISKNIEDAERNELEFASENYKNDIPNEIDEHNNKMGRNMNKLNSNIKSKIFIFSKEISSVFALQYKSKTNIFTLDTILKQNEKLFPEYDNIKPYSYNLLNLKNNSNALLLPFSSSNDYLKNNDKKNLPWNFNYDENGTNANNSIAFQNYNNFIVQRLNNISINITSIEKDLRYLLLSIIFVFDKHKKIPMNYIFQMKTLLHEYQKTKQKFMICLRGLNHNKNINIFSNHNDIRDTDIKHYGYNDYDYINKEMDAIDEPIHICEYTNKFIDLSFEGKEKCIDYCSMLNIWDKIFNNYTNHDDCLLLSNLYRILNSTYPLTNKDFNRIIDGIFLKNNESMLIKRRRKPNEGSRNHDLTEFSSQKHKKSWYWNIFYAITLVIVIPFIFIYRLFKKQTNNKNNNKIIMRKKKITDYDEDSNDTYDDELLNIDKVLLKRNKRKLANILKENGISSLNKTELEKYMKKSLKKAQDIEQLTLVDILARHARDSDSDSNFYDIHDGKYNLYPYYYSGQESKYSLPNMHYIDLSKSNSGETNKYDLNGNNLFYMHRRRAASQDVTYKQSFIVKKRVRSNYKLGNKYNKRNYTDYEKDKKNSSIKERNINEKAFDKSDFINFLKNFNKKFMKKNPFVDHLMKNNKTDSNNEFNNDNKEKSKYLYNEKYNLNSADEENKSPYAKKYSDEKKNRSKSSKYIENTQSNNNDNTNGNMNVGNHINNDKMNNKGSSARNLSIIQTSHIPYDAPLADFLENGRFTRTFQNISLIGQGGFGSVYKVSHRLEPGSPTYAVKFIYLKVSSLDNVNSRRYFREIAANRDIYSKHVVRYYTWWCEEPQFLPMDIIPKEIQNTLKKNKDPFKKVCNKNKKDNDYSSDCTVSSGENNKFDLKNYKKVITKKNSPKLKFYSDNDTPYNKRKNINQKNSFLNDKNLSDNIYIIENNKKKKKKKKKKKKIIYKEKKKGNIGINEDNKYSTFYEQNNPNNFSSTLQEYDPFGYGYLSENERDLIVFADNDESNGSGHSKKNDNDERKSLNNQNGIYNTGGDISKNGNVIHDDSNMLACQQSDKNSMTIKNTQGTSINGTINRNTISDETGTQGTNNNPKYSIDYHIDAIVKPKGESFTWVEKSPSNKYKKDSLDIINRNRKLIEEKNKKEKGQEKEKYKLKMNGELEKKENANKIKYYKKKNVGPEFSIVLLLQMEFCKGFTLRRWLDRSSRSDKPLYFTYGDKNTNHPLEFDLFKQLIKGLKDIHSTCFIHRDLKPENIFVDLDTYILKIGDLGLVRFIEEKKRENDLNNIDNFKDNIYTEINHNTITSQISLKGQMIGTPGYTAPEGGALCDEKADIYSAALILLELLCPRFNTIMERYKTLNDFRNYYTVPDYVKIHLNPWYILMLQMSKPNPADRPSAADLYNKIKVLLDPHLTDFTFSFNDINNDDLEYTGNRNVINSTNPNGDIKENVNQNNLVDDKGNNNIINGNEVDH.

The Cytoplasmic portion of the chain corresponds to M1 to C16. The helical transmembrane segment at I17–L37 threads the bilayer. At V38–S1488 the chain is on the lumenal side. Positions K1028–R1048 are disordered. The chain crosses the membrane as a helical span at residues W1489 to Y1509. The Cytoplasmic portion of the chain corresponds to R1510 to H2591. The segment at N1781–K1840 is disordered. A compositionally biased stretch (low complexity) spans N1813 to I1832. Residues I1880–V1888 and K1905 contribute to the ATP site. Disordered regions lie at residues D2123–I2157 and I2183–N2212. Residues K2134–S2143 show a composition bias toward basic and acidic residues. The region spanning M2181 to L2532 is the Protein kinase domain. Catalysis depends on D2369, which acts as the Proton acceptor. At T2436 the chain carries Phosphothreonine; by autocatalysis. Residues S2558–L2574 show a composition bias toward polar residues. The segment at S2558–H2591 is disordered. A compositionally biased stretch (low complexity) spans N2580–H2591.

The protein belongs to the protein kinase superfamily. Ser/Thr protein kinase family. GCN2 subfamily. In terms of assembly, may form oligomers in response to stress; oligomerization may result in catalytic activity. Interacts with BIP; the interaction is disrupted in response to stress.

Its subcellular location is the endoplasmic reticulum membrane. The catalysed reaction is L-seryl-[protein] + ATP = O-phospho-L-seryl-[protein] + ADP + H(+). It catalyses the reaction L-threonyl-[protein] + ATP = O-phospho-L-threonyl-[protein] + ADP + H(+). Dissociation from BIP and oligomerization, may results autophosphorylation and kinase activity induction. During the asexual blood stage, phosphorylates translation factor eIF2alpha in late schizonts resulting in protein translation inhibition. Plays a role in trophozoite differentiation into schizonts. This Plasmodium berghei (strain Anka) protein is Eukaryotic translation initiation factor 2-alpha kinase PK4.